The primary structure comprises 513 residues: Activin receptor type-2A (513 aa).

The N-terminal stretch at 1 to 19 is a signal peptide; that stretch reads MGAAAKLAFAVFLISCSSG. At 20 to 135 the chain is on the extracellular side; it reads AILGRSETQE…TSNPVTPKPP (116 aa). Disulfide bonds link Cys-30–Cys-60, Cys-50–Cys-78, Cys-85–Cys-104, Cys-91–Cys-103, and Cys-105–Cys-110. Asn-43 and Asn-66 each carry an N-linked (GlcNAc...) asparagine glycan. Residues 136-161 traverse the membrane as a helical segment; the sequence is YYNILLYSLVPLMLIAGIVICAFWVY. The Cytoplasmic segment spans residues 162–513; it reads RHHKMAYPPV…VDFPPKESSL (352 aa). The Protein kinase domain occupies 192–485; the sequence is LQLLEVKARG…GERITQMQRL (294 aa). ATP contacts are provided by residues 198 to 206 and Lys-219; that span reads KARGRFGCV. The active-site Proton acceptor is the Asp-322.

The protein belongs to the protein kinase superfamily. TKL Ser/Thr protein kinase family. TGFB receptor subfamily. As to quaternary structure, part of a complex consisting of MAGI2/ARIP1, ACVR2A, ACVR1B and SMAD3. Interacts with MAGI2/ARIP1. Interacts with type I receptor ACVR1. Interacts with BMP7. Interacts with TSC22D1/TSC-22. Interacts with activin A/INHBA. The cofactor is Mg(2+). Mn(2+) serves as cofactor.

The protein resides in the cell membrane. It carries out the reaction L-threonyl-[receptor-protein] + ATP = O-phospho-L-threonyl-[receptor-protein] + ADP + H(+). The enzyme catalyses L-seryl-[receptor-protein] + ATP = O-phospho-L-seryl-[receptor-protein] + ADP + H(+). On ligand binding, forms a receptor complex consisting of two type II and two type I transmembrane serine/threonine kinases. Type II receptors phosphorylate and activate type I receptors which autophosphorylate, then bind and activate SMAD transcriptional regulators. Receptor for activin A, activin B and inhibin A. Mediates induction of adipogenesis by GDF6. In Bos taurus (Bovine), this protein is Activin receptor type-2A (ACVR2A).